A 628-amino-acid polypeptide reads, in one-letter code: DNA-directed RNA polymerase subunit gamma (628 aa).

Cysteine 71, cysteine 73, cysteine 86, and cysteine 89 together coordinate Zn(2+). 3 residues coordinate Mg(2+): aspartate 467, aspartate 469, and aspartate 471.

This sequence belongs to the RNA polymerase beta' chain family. RpoC1 subfamily. In terms of assembly, in cyanobacteria the RNAP catalytic core is composed of 2 alpha, 1 beta, 1 beta', 1 gamma and 1 omega subunit. When a sigma factor is associated with the core the holoenzyme is formed, which can initiate transcription. Mg(2+) serves as cofactor. It depends on Zn(2+) as a cofactor.

The catalysed reaction is RNA(n) + a ribonucleoside 5'-triphosphate = RNA(n+1) + diphosphate. Its function is as follows. DNA-dependent RNA polymerase catalyzes the transcription of DNA into RNA using the four ribonucleoside triphosphates as substrates. This chain is DNA-directed RNA polymerase subunit gamma, found in Crocosphaera subtropica (strain ATCC 51142 / BH68) (Cyanothece sp. (strain ATCC 51142)).